A 379-amino-acid polypeptide reads, in one-letter code: Glutamate 5-kinase (379 aa).

Residue K14 participates in ATP binding. Residues S54, D141, and N153 each contribute to the substrate site. ATP is bound by residues 173–174 (TD) and 215–221 (TGGMATK). The region spanning 280 to 358 (KGRLLLDIGA…DEIEPLLGYD (79 aa)) is the PUA domain.

Belongs to the glutamate 5-kinase family.

Its subcellular location is the cytoplasm. The catalysed reaction is L-glutamate + ATP = L-glutamyl 5-phosphate + ADP. It participates in amino-acid biosynthesis; L-proline biosynthesis; L-glutamate 5-semialdehyde from L-glutamate: step 1/2. Catalyzes the transfer of a phosphate group to glutamate to form L-glutamate 5-phosphate. The chain is Glutamate 5-kinase from Shewanella amazonensis (strain ATCC BAA-1098 / SB2B).